Consider the following 90-residue polypeptide: DNA-directed RNA polymerase subunit omega (90 aa).

Belongs to the RNA polymerase subunit omega family. As to quaternary structure, the RNAP catalytic core consists of 2 alpha, 1 beta, 1 beta' and 1 omega subunit. When a sigma factor is associated with the core the holoenzyme is formed, which can initiate transcription.

It carries out the reaction RNA(n) + a ribonucleoside 5'-triphosphate = RNA(n+1) + diphosphate. Promotes RNA polymerase assembly. Latches the N- and C-terminal regions of the beta' subunit thereby facilitating its interaction with the beta and alpha subunits. This Alteromonas mediterranea (strain DSM 17117 / CIP 110805 / LMG 28347 / Deep ecotype) protein is DNA-directed RNA polymerase subunit omega.